The primary structure comprises 782 residues: E3 UFM1-protein ligase 1 homolog (782 aa).

A disordered region spans residues Val-405 to Lys-478.

Belongs to the UFL1 family.

In terms of biological role, E3 UFM1-protein ligase that mediates ufmylation of target proteins. This is E3 UFM1-protein ligase 1 homolog from Drosophila sechellia (Fruit fly).